A 459-amino-acid polypeptide reads, in one-letter code: Serine--tRNA ligase (459 aa).

Position 254–256 (254–256 (TAE)) interacts with L-serine. Residues 285–287 (RKE) and Val-301 contribute to the ATP site. Glu-308 lines the L-serine pocket. 372-375 (EMVS) lines the ATP pocket. L-serine is bound at residue Thr-408.

It belongs to the class-II aminoacyl-tRNA synthetase family. Type-1 seryl-tRNA synthetase subfamily. As to quaternary structure, homodimer. The tRNA molecule binds across the dimer.

Its subcellular location is the cytoplasm. The catalysed reaction is tRNA(Ser) + L-serine + ATP = L-seryl-tRNA(Ser) + AMP + diphosphate + H(+). The enzyme catalyses tRNA(Sec) + L-serine + ATP = L-seryl-tRNA(Sec) + AMP + diphosphate + H(+). It participates in aminoacyl-tRNA biosynthesis; selenocysteinyl-tRNA(Sec) biosynthesis; L-seryl-tRNA(Sec) from L-serine and tRNA(Sec): step 1/1. In terms of biological role, catalyzes the attachment of serine to tRNA(Ser). Is also able to aminoacylate tRNA(Sec) with serine, to form the misacylated tRNA L-seryl-tRNA(Sec), which will be further converted into selenocysteinyl-tRNA(Sec). This is Serine--tRNA ligase from Desulfurococcus amylolyticus (strain DSM 18924 / JCM 16383 / VKM B-2413 / 1221n) (Desulfurococcus kamchatkensis).